A 701-amino-acid polypeptide reads, in one-letter code: Elongation factor G (701 aa).

In terms of domain architecture, tr-type G spans 8 to 291; that stretch reads GRYRNIGIVA…AVIDYLPAPT (284 aa). GTP contacts are provided by residues 17 to 24, 89 to 93, and 143 to 146; these read AHVDAGKT, DTPGH, and NKMD.

The protein belongs to the TRAFAC class translation factor GTPase superfamily. Classic translation factor GTPase family. EF-G/EF-2 subfamily.

It is found in the cytoplasm. In terms of biological role, catalyzes the GTP-dependent ribosomal translocation step during translation elongation. During this step, the ribosome changes from the pre-translocational (PRE) to the post-translocational (POST) state as the newly formed A-site-bound peptidyl-tRNA and P-site-bound deacylated tRNA move to the P and E sites, respectively. Catalyzes the coordinated movement of the two tRNA molecules, the mRNA and conformational changes in the ribosome. The chain is Elongation factor G from Pseudomonas syringae pv. syringae (strain B728a).